Consider the following 475-residue polypeptide: tRNA-2-methylthio-N(6)-dimethylallyladenosine synthase (475 aa).

The MTTase N-terminal domain maps to 2-119 (AKLHITTWGC…LPEMINQIRS (118 aa)). The [4Fe-4S] cluster site is built by Cys11, Cys48, Cys82, Cys156, Cys160, and Cys163. The Radical SAM core domain maps to 142–374 (KAEGPTAFVS…QQRINHQAMQ (233 aa)). A TRAM domain is found at 377 to 440 (RLMLGTEQRI…SNSLRGEVIR (64 aa)).

The protein belongs to the methylthiotransferase family. MiaB subfamily. In terms of assembly, monomer. [4Fe-4S] cluster is required as a cofactor.

It is found in the cytoplasm. The catalysed reaction is N(6)-dimethylallyladenosine(37) in tRNA + (sulfur carrier)-SH + AH2 + 2 S-adenosyl-L-methionine = 2-methylsulfanyl-N(6)-dimethylallyladenosine(37) in tRNA + (sulfur carrier)-H + 5'-deoxyadenosine + L-methionine + A + S-adenosyl-L-homocysteine + 2 H(+). Catalyzes the methylthiolation of N6-(dimethylallyl)adenosine (i(6)A), leading to the formation of 2-methylthio-N6-(dimethylallyl)adenosine (ms(2)i(6)A) at position 37 in tRNAs that read codons beginning with uridine. The sequence is that of tRNA-2-methylthio-N(6)-dimethylallyladenosine synthase from Haemophilus ducreyi (strain 35000HP / ATCC 700724).